Consider the following 307-residue polypeptide: Ribosomal RNA small subunit methyltransferase H (307 aa).

Residues G33–H35, D52, L83, D97, and Q104 contribute to the S-adenosyl-L-methionine site.

It belongs to the methyltransferase superfamily. RsmH family.

The protein resides in the cytoplasm. It carries out the reaction cytidine(1402) in 16S rRNA + S-adenosyl-L-methionine = N(4)-methylcytidine(1402) in 16S rRNA + S-adenosyl-L-homocysteine + H(+). Its function is as follows. Specifically methylates the N4 position of cytidine in position 1402 (C1402) of 16S rRNA. This is Ribosomal RNA small subunit methyltransferase H from Campylobacter fetus subsp. fetus (strain 82-40).